Reading from the N-terminus, the 911-residue chain is General transcription factor 3C polypeptide 2 (911 aa).

2 disordered regions span residues Leu34–Ala187 and Ala205–Asn297. Polar residues predominate over residues Asp35–Glu46. Ser63 is subject to Phosphoserine. The segment covering Pro64–Gln81 has biased composition (basic and acidic residues). Basic residues predominate over residues Ser92–Lys112. The segment covering Pro114–Pro123 has biased composition (pro residues). Ser132, Ser165, Ser167, Ser220, and Ser260 each carry phosphoserine. The span at Glu253–Gly262 shows a compositional bias: acidic residues. The segment covering Pro263 to Pro275 has biased composition (low complexity). WD repeat units lie at residues Cys465–Ala521 and Ser552–Arg593. A Phosphoserine modification is found at Ser597. One copy of the WD 3 repeat lies at Ala611–Asn651. The tract at residues Ser765 to Arg785 is disordered. One copy of the WD 4 repeat lies at Leu832–Gly874. Residues Ser871, Ser892, and Ser893 each carry the phosphoserine modification. Residues Phe889 to Pro911 are disordered. A Phosphothreonine modification is found at Thr895. The residue at position 901 (Ser901) is a Phosphoserine.

Part of the TFIIIC subcomplex TFIIIC2, consisting of six subunits, GTF3C1, GTF3C2, GTF3C3, GTF3C4, GTF3C5 and GTF3C6.

Its subcellular location is the nucleus. Functionally, required for RNA polymerase III-mediated transcription. Component of TFIIIC that initiates transcription complex assembly on tRNA and is required for transcription of 5S rRNA and other stable nuclear and cytoplasmic RNAs. May play a direct role in stabilizing interactions of TFIIIC2 with TFIIIC1. This is General transcription factor 3C polypeptide 2 (GTF3C2) from Pongo abelii (Sumatran orangutan).